The following is a 114-amino-acid chain: MEKAYRIKKNTDFQTIYKRGKSVANRQFVVYTYNSNKDHFRLGISVSKKLGNAVTRNRIKRAIRENFKIHKEDIIARDIIVIARQPAKDMTTLEIQGSLEHVLKIAKVFNKKIK.

The protein belongs to the RnpA family. In terms of assembly, consists of a catalytic RNA component (M1 or rnpB) and a protein subunit.

The catalysed reaction is Endonucleolytic cleavage of RNA, removing 5'-extranucleotides from tRNA precursor.. RNaseP catalyzes the removal of the 5'-leader sequence from pre-tRNA to produce the mature 5'-terminus. It can also cleave other RNA substrates such as 4.5S RNA. The protein component plays an auxiliary but essential role in vivo by binding to the 5'-leader sequence and broadening the substrate specificity of the ribozyme. This is Ribonuclease P protein component from Staphylococcus haemolyticus (strain JCSC1435).